The chain runs to 275 residues: Adaptin ear-binding coat-associated protein 1 (275 aa).

A disordered region spans residues 170 to 191 (KGGASKPRTARGGGLSLLPPPP). Omega-N-methylarginine is present on R180. A Phosphothreonine modification is found at T211. 2 consecutive short sequence motifs (WXXF motif) follow at residues 252–255 (WGDF) and 272–275 (WVQF). The disordered stretch occupies residues 254–275 (DFSTASSSVPNQAPQPSNWVQF). Over residues 256-275 (STASSSVPNQAPQPSNWVQF) the composition is skewed to polar residues.

Belongs to the NECAP family. As to quaternary structure, interacts with AP1G1 and AP2A1 components of the adapter protein complexes AP-1 and AP-2. Interacts with the GAE domain proteins GGA1, GGA2 and GGA3.

The protein localises to the cytoplasmic vesicle. It is found in the clathrin-coated vesicle membrane. Its subcellular location is the cell membrane. In terms of biological role, involved in endocytosis. The polypeptide is Adaptin ear-binding coat-associated protein 1 (NECAP1) (Homo sapiens (Human)).